A 208-amino-acid chain; its full sequence is Imidazoleglycerol-phosphate dehydratase (208 aa).

This sequence belongs to the imidazoleglycerol-phosphate dehydratase family.

The protein localises to the cytoplasm. The enzyme catalyses D-erythro-1-(imidazol-4-yl)glycerol 3-phosphate = 3-(imidazol-4-yl)-2-oxopropyl phosphate + H2O. Its pathway is amino-acid biosynthesis; L-histidine biosynthesis; L-histidine from 5-phospho-alpha-D-ribose 1-diphosphate: step 6/9. This is Imidazoleglycerol-phosphate dehydratase from Hyphomonas neptunium (strain ATCC 15444).